The sequence spans 296 residues: Probable 2-(5''-triphosphoribosyl)-3'-dephosphocoenzyme-A synthase (296 aa).

It belongs to the CitG/MdcB family.

The enzyme catalyses 3'-dephospho-CoA + ATP = 2'-(5''-triphospho-alpha-D-ribosyl)-3'-dephospho-CoA + adenine. This chain is Probable 2-(5''-triphosphoribosyl)-3'-dephosphocoenzyme-A synthase, found in Streptococcus mutans serotype c (strain ATCC 700610 / UA159).